The chain runs to 1116 residues: ELKS/Rab6-interacting/CAST family member 1 (1116 aa).

Residues 1-54 (MYGSARSVGKVEPSSQSPGRSPRLPRSPRLGHRRTNSTGGSSGSSVGGGSGKTL) are disordered. K10 carries the N6-acetyllysine modification. The span at 13 to 28 (PSSQSPGRSPRLPRSP) shows a compositional bias: low complexity. 3 positions are modified to phosphoserine: S17, S21, and S37. T38 bears the Phosphothreonine mark. The segment covering 40–51 (GSSGSSVGGGSG) has biased composition (gly residues). Phosphoserine is present on residues S55, S75, and S94. Positions 144–988 (RQARDNTIMD…RMKLMADNYE (845 aa)) form a coiled coil. A compositionally biased stretch (basic and acidic residues) spans 590–602 (KEKQMSSLKERVK). Disordered stretches follow at residues 590–609 (KEKQ…ADTT) and 814–836 (ARRR…RKKD). S1005 carries the post-translational modification Phosphoserine. T1046 is modified (phosphothreonine). Residues 1046–1108 (TPPASYNLDD…DHCPDILEQV (63 aa)) enclose the FIP-RBD domain. The stretch at 1060 to 1100 (WENELQKMTRGQLQDELEKGERDNAELQEFANAILQQIADH) forms a coiled coil.

Part of a complex with CHUK, IKBKB and IKBKG. Interacts with CHUK, IKBKB and IKBKG. The interaction with IKBKG is independent of CHUK and IKBKB. Interacts with NFKBIA. Isoform 4 interacts with PPFIA1, and through its C-terminus with the PDZ domains of RIMS1 and RIMS2. Interacts with ERC2/CAST1. Interacts with the GTB-bound forms of RAB6A isoform 1 and isoform 2 and with RAB6B. The interaction was strongest with RAB6B, followed by RAB6A isoform 2 and weakest with RAB6A isoform 1. Interacts with SDCCAG8. Part of a cortical microtubule stabilization complex (CMSC) composed of KANK1, PPFIA1, PPFIBP1, ERC1/ELKS, PHLDB2/LL5beta, CLASPs, KIF21A and possibly additional interactors; within CMSCs KANK1 and PHLDB2/LL5beta appear to be the core components for targeting of microtubule-binding proteins KIF21A and CLASPs, whereas PPFIA1, PPFIBP1 and ERC1/ELKS serve as scaffolds for protein clustering. Widely expressed. Isoform 2 and isoform 4 are abundantly expressed in brain. Isoform 1 and isoform 3 are predominantly expressed in testis and thyroid, and isoform 1 predominates in other tissues tested.

It is found in the cytoplasm. Its subcellular location is the cytoskeleton. The protein resides in the microtubule organizing center. It localises to the centrosome. The protein localises to the membrane. It is found in the golgi apparatus membrane. Its subcellular location is the presynaptic cell membrane. The protein resides in the cell projection. It localises to the podosome. Regulatory subunit of the IKK complex. Probably recruits IkappaBalpha/NFKBIA to the complex. May be involved in the organization of the cytomatrix at the nerve terminals active zone (CAZ) which regulates neurotransmitter release. May be involved in vesicle trafficking at the CAZ. May be involved in Rab-6 regulated endosomes to Golgi transport. The chain is ELKS/Rab6-interacting/CAST family member 1 (ERC1) from Homo sapiens (Human).